Here is a 145-residue protein sequence, read N- to C-terminus: Hemoglobin subunit beta-2 (145 aa).

Residues 2–145 form the Globin domain; it reads HLTDQEIKYI…VADAVGKGYH (144 aa). Heme b-binding residues include His63 and His91.

This sequence belongs to the globin family. Red blood cells.

In Telmatobius peruvianus (Andean frog), this protein is Hemoglobin subunit beta-2.